We begin with the raw amino-acid sequence, 283 residues long: Cyclic AMP-dependent transcription factor ATF-5 (283 aa).

The tract at residues 1 to 21 is required for protein stabilization induced by IL1B; it reads MSLLATLGLELDRALLPASGL. Lys29 is subject to N6-acetyllysine; by EP300. Disordered regions lie at residues 118–154 and 168–241; these read DAPL…PQPP and SEAG…EGEC. Residues 119–218 are interaction with PTP4A1; that stretch reads APLLPPPSPP…GDRKQKKRDQ (100 aa). Composition is skewed to pro residues over residues 121 to 145 and 183 to 203; these read LLPP…PLPL and PQQP…PYPS. A bZIP domain is found at 209–272; it reads GDRKQKKRDQ…QYVKDLLIEV (64 aa). The segment at 211–231 is basic motif; the sequence is RKQKKRDQNKSAALRYRQRKR. A leucine-zipper region spans residues 237–251; that stretch reads LEGECQGLEARNREL. Residue Ser257 is modified to Phosphoserine.

This sequence belongs to the bZIP family. Binds DNA as a dimer. Interacts with PTP4A1/PRL-1. Interacts with CCND3, but not with CCND1 or CCND2. Interacts with HSPA1A or HSPA1B; the interaction protects ATF5 from degradation via proteasome-dependent and caspase-dependent processes. Interacts (via C-terminal region) with NPM1 (via C-terminal region); the interaction leads to loss of association between HSPA1A or HSPA1B and ATF5 and promotes ATF5 degradation via proteasome-dependent and caspase-dependent processes. Interacts with NLK; the interaction stabilizes ATF5 at the protein level in a kinase-independent manner. Interacts with alpha-tubulin, gamma-tubulin members TUBGCP2 and TUBGCP4, PCNT; the ATF5:PCNT:polyglutamylated tubulin (PGT) tripartite unites the mother centriole and the pericentriolar material (PCM) in the centrosome. Interacts with CEBPB and EP300; EP300 is required for ATF5 and CEBPB interaction and DNA binding. Acetylated at Lys-29 by EP300, the acetylation enhances the interaction with CEBPB, DNA-binding and transactivation activity. In terms of processing, ubiquitinated by CDC34 and UBE2B in order to be degraded by the proteasome. Cisplatin inhibits ubiquitination and proteasome-mediated degradation by inhibiting the interaction with CDC34. Ubiquitination and degradation by the proteasome are inhibited by NLK in a kinase-independent manner. Post-translationally, phosphorylated by NLK, probably at Ser-92 and Ser-126. In terms of tissue distribution, highly expressed in liver and at lower levels in heart, brain, lung, kidney, adipose tissue, and skeletal muscle. Expressed in some immature and in all mature olfactory sensory neurons (at protein level).

It localises to the cytoplasm. It is found in the nucleus. The protein localises to the cytoskeleton. The protein resides in the microtubule organizing center. Its subcellular location is the centrosome. Its function is as follows. Transcription factor that either stimulates or represses gene transcription through binding of different DNA regulatory elements such as cAMP response element (CRE) (consensus: 5'-GTGACGT[AC][AG]-3'), ATF5-specific response element (ARE) (consensus: 5'-C[CT]TCT[CT]CCTT[AT]-3') but also the amino acid response element (AARE), present in many viral and cellular promoters. Critically involved, often in a cell type-dependent manner, in cell survival, proliferation, and differentiation. Its transcriptional activity is enhanced by CCND3 and slightly inhibited by CDK4. Important regulator of the cerebral cortex formation, functions in cerebral cortical neuroprogenitor cells to maintain proliferation and to block differentiation into neurons. Must be down-regulated in order for such cells to exit the cycle and differentiate. Participates in the pathways by which SHH promotes cerebellar granule neuron progenitor cells proliferation. Critical for survival of mature olfactory sensory neurons (OSN), directs expression of OSN-specific genes. May be involved in osteogenic differentiation. Promotes cell proliferation and survival by inducing the expression of EGR1 sinergistically with ELK1. Once acetylated by EP300, binds to ARE sequences on target genes promoters, such as BCL2 and EGR1. Plays an anti-apoptotic role through the transcriptional regulation of BCL2, this function seems to be cell type-dependent. Cooperates with NR1I3/CAR in the transcriptional activation of CYP2B6 in liver. In hepatic cells, represses CRE-dependent transcription and inhibits proliferation by blocking at G2/M phase. May act as a negative regulator of IL1B transduction pathway in liver. Upon IL1B stimulus, cooperates with NLK to activate the transactivation activity of C/EBP subfamily members. Besides its function of transcription factor, acts as a cofactor of CEBPB to activate CEBPA and promote adipocyte differentiation. Regulates centrosome dynamics in a cell-cycle- and centriole-age-dependent manner. Forms 9-foci symmetrical ring scaffold around the mother centriole to control centrosome function and the interaction between centrioles and pericentriolar material. This Mus musculus (Mouse) protein is Cyclic AMP-dependent transcription factor ATF-5 (Atf5).